A 687-amino-acid chain; its full sequence is Protein SDA1 homolog (687 aa).

Disordered regions lie at residues 517–549, 561–587, and 615–687; these read SSDE…SQMR, MKQL…EPQG, and TVIA…KSKI. Over residues 520 to 537 the composition is skewed to acidic residues; that stretch reads EEQEDEDPSGENQEGEED. Residues 644-666 are compositionally biased toward basic residues; the sequence is EKRRKKNFMMMRHNKLVRGKTKR. A compositionally biased stretch (basic and acidic residues) spans 667-680; the sequence is SFRDKQIALRDSLL.

The protein belongs to the SDA1 family.

It is found in the nucleus. It localises to the nucleolus. Its function is as follows. Required for 60S pre-ribosomal subunits export to the cytoplasm. The polypeptide is Protein SDA1 homolog (sdad1) (Nematostella vectensis (Starlet sea anemone)).